The following is a 224-amino-acid chain: Ion-translocating oxidoreductase complex subunit E (224 aa).

A run of 5 helical transmembrane segments spans residues 51–71 (LGLGIATLFVLICSNTVVSLF), 81–101 (IPIYVMIIATTVTVVQLLMNA), 105–125 (SLYQSLGIFIPLIVTNCIVIG), 140–160 (MFDGFAMGLGMCLSLVFLGAI), and 194–214 (HFLLAILPPGAFIGLGLILAI).

It belongs to the NqrDE/RnfAE family. As to quaternary structure, the complex is composed of six subunits: RnfA, RnfB, RnfC, RnfD, RnfE and RnfG.

The protein localises to the cell inner membrane. Its function is as follows. Part of a membrane-bound complex that couples electron transfer with translocation of ions across the membrane. The sequence is that of Ion-translocating oxidoreductase complex subunit E from Pasteurella multocida (strain Pm70).